A 210-amino-acid polypeptide reads, in one-letter code: Thymidylate kinase (210 aa).

G9 to S16 serves as a coordination point for ATP.

Belongs to the thymidylate kinase family.

It carries out the reaction dTMP + ATP = dTDP + ADP. Its function is as follows. Phosphorylation of dTMP to form dTDP in both de novo and salvage pathways of dTTP synthesis. The polypeptide is Thymidylate kinase (Aliivibrio fischeri (strain MJ11) (Vibrio fischeri)).